A 482-amino-acid chain; its full sequence is uncharacterized protein (482 aa).

The HTH gntR-type domain occupies 12 to 80; sequence LPKYRQIVHF…MGKGTVVINN (69 aa). Residues 40-59 constitute a DNA-binding region (H-T-H motif); the sequence is QRTLAKDFQVNRSTVITALE. Lys-325 is subject to N6-(pyridoxal phosphate)lysine.

In the C-terminal section; belongs to the class-I pyridoxal-phosphate-dependent aminotransferase family. Pyridoxal 5'-phosphate serves as cofactor.

This is an uncharacterized protein from Bacillus subtilis (strain 168).